A 403-amino-acid polypeptide reads, in one-letter code: Probable tRNA sulfurtransferase (403 aa).

Residues 60–165 (QLAEERLKPI…KEGVFLSCRT (106 aa)) form the THUMP domain. Residues 183–184 (ML), 208–209 (HF), arginine 265, glycine 287, and glutamine 296 each bind ATP.

The protein belongs to the ThiI family.

Its subcellular location is the cytoplasm. It carries out the reaction [ThiI sulfur-carrier protein]-S-sulfanyl-L-cysteine + a uridine in tRNA + 2 reduced [2Fe-2S]-[ferredoxin] + ATP + H(+) = [ThiI sulfur-carrier protein]-L-cysteine + a 4-thiouridine in tRNA + 2 oxidized [2Fe-2S]-[ferredoxin] + AMP + diphosphate. The enzyme catalyses [ThiS sulfur-carrier protein]-C-terminal Gly-Gly-AMP + S-sulfanyl-L-cysteinyl-[cysteine desulfurase] + AH2 = [ThiS sulfur-carrier protein]-C-terminal-Gly-aminoethanethioate + L-cysteinyl-[cysteine desulfurase] + A + AMP + 2 H(+). The protein operates within cofactor biosynthesis; thiamine diphosphate biosynthesis. In terms of biological role, catalyzes the ATP-dependent transfer of a sulfur to tRNA to produce 4-thiouridine in position 8 of tRNAs, which functions as a near-UV photosensor. Also catalyzes the transfer of sulfur to the sulfur carrier protein ThiS, forming ThiS-thiocarboxylate. This is a step in the synthesis of thiazole, in the thiamine biosynthesis pathway. The sulfur is donated as persulfide by IscS. The protein is Probable tRNA sulfurtransferase of Listeria monocytogenes serovar 1/2a (strain ATCC BAA-679 / EGD-e).